Reading from the N-terminus, the 151-residue chain is Large ribosomal subunit protein uL13 (151 aa).

This sequence belongs to the universal ribosomal protein uL13 family. Part of the 50S ribosomal subunit.

Functionally, this protein is one of the early assembly proteins of the 50S ribosomal subunit, although it is not seen to bind rRNA by itself. It is important during the early stages of 50S assembly. This Mycoplasma mycoides subsp. mycoides SC (strain CCUG 32753 / NCTC 10114 / PG1) protein is Large ribosomal subunit protein uL13.